The chain runs to 518 residues: Protein nucleotidyltransferase YdiU (518 aa).

Positions 100, 102, 103, 123, 135, 136, 193, and 200 each coordinate ATP. Residue Asp-270 is the Proton acceptor of the active site. Mg(2+) contacts are provided by Asn-271 and Asp-280. Asp-280 contacts ATP.

Belongs to the SELO family. Requires Mg(2+) as cofactor. The cofactor is Mn(2+).

It carries out the reaction L-seryl-[protein] + ATP = 3-O-(5'-adenylyl)-L-seryl-[protein] + diphosphate. It catalyses the reaction L-threonyl-[protein] + ATP = 3-O-(5'-adenylyl)-L-threonyl-[protein] + diphosphate. The catalysed reaction is L-tyrosyl-[protein] + ATP = O-(5'-adenylyl)-L-tyrosyl-[protein] + diphosphate. The enzyme catalyses L-histidyl-[protein] + UTP = N(tele)-(5'-uridylyl)-L-histidyl-[protein] + diphosphate. It carries out the reaction L-seryl-[protein] + UTP = O-(5'-uridylyl)-L-seryl-[protein] + diphosphate. It catalyses the reaction L-tyrosyl-[protein] + UTP = O-(5'-uridylyl)-L-tyrosyl-[protein] + diphosphate. Functionally, nucleotidyltransferase involved in the post-translational modification of proteins. It can catalyze the addition of adenosine monophosphate (AMP) or uridine monophosphate (UMP) to a protein, resulting in modifications known as AMPylation and UMPylation. The chain is Protein nucleotidyltransferase YdiU from Xanthomonas oryzae pv. oryzae (strain MAFF 311018).